Reading from the N-terminus, the 182-residue chain is Ribosome-recycling factor (182 aa).

The segment at 136–156 (VKKQEKDGDFSEDQSRDEQDS) is disordered.

Belongs to the RRF family.

Its subcellular location is the cytoplasm. Responsible for the release of ribosomes from messenger RNA at the termination of protein biosynthesis. May increase the efficiency of translation by recycling ribosomes from one round of translation to another. The sequence is that of Ribosome-recycling factor from Synechococcus sp. (strain CC9902).